A 1245-amino-acid polypeptide reads, in one-letter code: ATP-dependent helicase/deoxyribonuclease subunit B (1245 aa).

Positions 737–758 (WDDQNNAPTTDLPDRPNPRASE) are disordered. The span at 748–758 (LPDRPNPRASE) shows a compositional bias: basic and acidic residues.

It belongs to the helicase family. AddB/RexB type 2 subfamily. As to quaternary structure, heterodimer of AddA and RexB. Mg(2+) is required as a cofactor.

Its function is as follows. The heterodimer acts as both an ATP-dependent DNA helicase and an ATP-dependent, dual-direction single-stranded exonuclease. Recognizes the chi site generating a DNA molecule suitable for the initiation of homologous recombination. This subunit has 5' -&gt; 3' nuclease activity but not helicase activity. The chain is ATP-dependent helicase/deoxyribonuclease subunit B from Limosilactobacillus fermentum (strain NBRC 3956 / LMG 18251) (Lactobacillus fermentum).